Reading from the N-terminus, the 473-residue chain is Uronate isomerase (473 aa).

This sequence belongs to the metallo-dependent hydrolases superfamily. Uronate isomerase family.

The enzyme catalyses D-glucuronate = D-fructuronate. It carries out the reaction aldehydo-D-galacturonate = keto-D-tagaturonate. Its pathway is carbohydrate metabolism; pentose and glucuronate interconversion. In Geobacillus stearothermophilus (Bacillus stearothermophilus), this protein is Uronate isomerase (uxaC).